Consider the following 615-residue polypeptide: TORTIFOLIA1-like protein 3 (615 aa).

HEAT repeat units follow at residues G44–L81, P86–K123, P125–D163, R168–L205, and G213–N250. Residues V288–S446 form a disordered region. The span at R318–K347 shows a compositional bias: polar residues. A compositionally biased stretch (basic and acidic residues) spans D391–H406. Polar residues predominate over residues S407–I426. At S456 the chain carries Phosphoserine.

This is TORTIFOLIA1-like protein 3 from Arabidopsis thaliana (Mouse-ear cress).